The sequence spans 92 residues: Small ribosomal subunit protein uS19 (92 aa).

The protein belongs to the universal ribosomal protein uS19 family.

Its function is as follows. Protein S19 forms a complex with S13 that binds strongly to the 16S ribosomal RNA. The polypeptide is Small ribosomal subunit protein uS19 (Prochlorococcus marinus (strain MIT 9312)).